A 351-amino-acid chain; its full sequence is L-threonine 3-dehydrogenase (351 aa).

Cys39 lines the Zn(2+) pocket. Catalysis depends on charge relay system residues Thr41 and His44. 6 residues coordinate Zn(2+): His64, Glu65, Cys94, Cys97, Cys100, and Cys108. Residues Ile176, Asp196, Arg201, 271–273, and 295–296 each bind NAD(+); these read LGI and IY.

This sequence belongs to the zinc-containing alcohol dehydrogenase family. As to quaternary structure, homotetramer. Zn(2+) is required as a cofactor.

The protein resides in the cytoplasm. It carries out the reaction L-threonine + NAD(+) = (2S)-2-amino-3-oxobutanoate + NADH + H(+). It participates in amino-acid degradation; L-threonine degradation via oxydo-reductase pathway; glycine from L-threonine: step 1/2. In terms of biological role, catalyzes the NAD(+)-dependent oxidation of L-threonine to 2-amino-3-ketobutyrate. This chain is L-threonine 3-dehydrogenase, found in Francisella philomiragia subsp. philomiragia (strain ATCC 25017 / CCUG 19701 / FSC 153 / O#319-036).